The chain runs to 239 residues: 1-(5-phosphoribosyl)-5-[(5-phosphoribosylamino)methylideneamino] imidazole-4-carboxamide isomerase (239 aa).

The active-site Proton acceptor is the Asp-9. The Proton donor role is filled by Asp-131.

Belongs to the HisA/HisF family.

Its subcellular location is the cytoplasm. The catalysed reaction is 1-(5-phospho-beta-D-ribosyl)-5-[(5-phospho-beta-D-ribosylamino)methylideneamino]imidazole-4-carboxamide = 5-[(5-phospho-1-deoxy-D-ribulos-1-ylimino)methylamino]-1-(5-phospho-beta-D-ribosyl)imidazole-4-carboxamide. It participates in amino-acid biosynthesis; L-histidine biosynthesis; L-histidine from 5-phospho-alpha-D-ribose 1-diphosphate: step 4/9. The polypeptide is 1-(5-phosphoribosyl)-5-[(5-phosphoribosylamino)methylideneamino] imidazole-4-carboxamide isomerase (Bacteroides fragilis (strain YCH46)).